We begin with the raw amino-acid sequence, 69 residues long: Putative membrane protein insertion efficiency factor (69 aa).

It belongs to the UPF0161 family.

It is found in the cell membrane. Functionally, could be involved in insertion of integral membrane proteins into the membrane. This is Putative membrane protein insertion efficiency factor from Thermomicrobium roseum (strain ATCC 27502 / DSM 5159 / P-2).